The following is a 933-amino-acid chain: Collagen alpha-2(I) chain (933 aa).

Residues 1–16 (SGGFDFGVGLGPGPMG) show a composition bias toward gly residues. Disordered regions lie at residues 1–191 (SGGF…LTGA) and 206–933 (LPGP…AGVR). A compositionally biased stretch (low complexity) spans 17-53 (LMGPRGPPGASGAPGPQGFQGPAGEPGEPGQTGPAGA). A 4-hydroxyproline mark is found at P24 and P30. The span at 57–72 (KAGEDGHPGKPGRPGE) shows a compositional bias: basic and acidic residues. K94 bears the 5-hydroxylysine; alternate mark. Residue K94 is glycosylated (O-linked (Gal...) hydroxylysine; alternate). Composition is skewed to low complexity over residues 108–137 (VGAP…SAGP), 162–176 (AGPR…VSGP), and 213–228 (PGPV…RGLV). The span at 280-289 (GLRGGPGSRG) shows a compositional bias: gly residues. 4-hydroxyproline is present on residues P317 and P320. Residues 413–422 (GVQGGKGEQG) are compositionally biased toward gly residues. Low complexity-rich tracts occupy residues 468–485 (PGES…SRGP) and 497–507 (EPGVVGAPGTA). A compositionally biased stretch (gly residues) spans 508 to 517 (GPAGSGGLPG). Low complexity-rich tracts occupy residues 540-584 (VGTT…PRGS), 591-611 (VGPA…QPGA), and 627-640 (PTGP…SGPN). The span at 644–656 (GPAGGRGDGGPPG) shows a compositional bias: gly residues. Low complexity predominate over residues 657 to 667 (LTGFPGAAGRT). Gly residues predominate over residues 704–713 (GETGAGGPPG). Low complexity-rich tracts occupy residues 721–748 (SGEP…LGLP) and 756–781 (LPGV…RGPS). Over residues 795 to 807 (AGRDGLPGHKGER) the composition is skewed to basic and acidic residues. Low complexity-rich tracts occupy residues 809–831 (YAGN…VGPA) and 840–860 (PGPA…PSGP). Residues 864–874 (RGDKGEGDKGP) are compositionally biased toward basic and acidic residues.

The protein belongs to the fibrillar collagen family. As to quaternary structure, trimers of one alpha 2(I) and two alpha 1(I) chains. Interacts (via C-terminus) with TMEM131 (via PapD-L domain); the interaction is direct and is involved in assembly and TRAPPIII ER-to-Golgi transport complex-dependent secretion of collagen. In terms of processing, prolines at the third position of the tripeptide repeating unit (G-X-Y) are hydroxylated in some or all of the chains. As to expression, expressed in bones.

The protein resides in the secreted. It localises to the extracellular space. It is found in the extracellular matrix. In terms of biological role, type I collagen is a member of group I collagen (fibrillar forming collagen). The chain is Collagen alpha-2(I) chain from Glyptodon sp. (strain SLP-2019) (Giant armadillo).